A 337-amino-acid chain; its full sequence is ELAV-like protein 1-A (337 aa).

RRM domains follow at residues 20-109 (TNLI…FARP), 117-197 (ANLY…FAAN), and 255-333 (WCIF…FKTS).

It belongs to the RRM elav family. As to quaternary structure, interacts (via RRM3) with cirbp. Unable to form oligomers. Part of a ribonucleoprotein (RNP) complex, at least composed of elavl1/elrA and/or elavl2/elrB, igf2bp3/vg1RBP, ddx6/Xp54, ybx2/frgy2, lsm14b/rap55b and, in a subset of RNP complexes, stau1/staufen. In terms of tissue distribution, ubiquitously expressed in adults.

The protein resides in the cytoplasm. Its subcellular location is the cell cortex. Functionally, RNA-binding protein that binds to the 3'-UTR region of mRNAs and increases their stability. Involved in embryonic stem cells (ESCs) differentiation: preferentially binds mRNAs that are not methylated by N6-methyladenosine (m6A), stabilizing them, promoting ESCs differentiation. Binds to poly-U elements and AU-rich elements (AREs) in the 3'-UTR of target mRNAs. May be involved in cytoplasmic mRNA polyadenylation. Acts cooperatively with cribp to stabilize AU-rich sequence (ARE)-containing mRNAs. May play a role during gastrulation. Required for the vegetal localization of vg1 mRNA. This is ELAV-like protein 1-A (elavl1-a) from Xenopus laevis (African clawed frog).